A 107-amino-acid chain; its full sequence is Glutaredoxin 4 (107 aa).

Residues 4-106 form the Glutaredoxin domain; it reads LDKIKKQISE…TLLAEVAAKH (103 aa). Lys-21 is a binding site for glutathione. [2Fe-2S] cluster is bound at residue Cys-29. Residues Arg-58, Phe-70, and 83 to 84 each bind glutathione; that span reads CD.

The protein belongs to the glutaredoxin family. Monothiol subfamily. In terms of assembly, homodimer.

It is found in the cytoplasm. Functionally, monothiol glutaredoxin involved in the biogenesis of iron-sulfur clusters. The sequence is that of Glutaredoxin 4 (grxD) from Haemophilus influenzae (strain ATCC 51907 / DSM 11121 / KW20 / Rd).